A 401-amino-acid chain; its full sequence is Formate dehydrogenase (401 aa).

Positions 123 and 147 each coordinate substrate. NAD(+) is bound by residues Ser148, 202–203 (RI), Asp222, 257–261 (PLHPE), Thr283, Asp309, 333–336 (HISG), and Ser381.

It belongs to the D-isomer specific 2-hydroxyacid dehydrogenase family. FDH subfamily. In terms of assembly, homodimer.

Its subcellular location is the cytoplasm. It catalyses the reaction formate + NAD(+) = CO2 + NADH. Its function is as follows. Catalyzes the NAD(+)-dependent oxidation of formate to carbon dioxide. Formate oxidation is the final step in the methanol oxidation pathway in methylotrophic microorganisms. Has a role in the detoxification of exogenous formate in non-methylotrophic organisms. The polypeptide is Formate dehydrogenase (Pseudomonas sp. (strain 101) (Achromobacter parvulus T1)).